Here is a 174-residue protein sequence, read N- to C-terminus: Secretory-abundant heat soluble protein 2 (174 aa).

The signal sequence occupies residues 1 to 19 (MHRFVLALVVFAGAAIVWA). The SAHS-c1 stretch occupies residues 30 to 60 (EWTGKPWMGKWESDPSKDENVEEFKKKLQLP). The interval 77–105 (YKKGDEYHHKIIINDAHYKNDIVFKLGQE) is SAHS-c2. Asn111 carries N-linked (GlcNAc...) asparagine glycosylation. Residues 118–172 (KYEDKDGALVGSVHYTGTKEQSLDKTINNVFKLEGDHLVKTSTIEGVTMKRHYNK) are SAHS-c3.

Belongs to the Secretory-abundant heat soluble protein (SAHS) family.

The protein resides in the secreted. In terms of biological role, secreted heat soluble protein acting as a molecular shield in water-deficient condition. Tardigrade-specific intrinsically disordered proteins (TDPs) are essential for desiccation tolerance by forming non-crystalline amorphous solids upon desiccation, and this vitrified state mirrors their protective capabilities. The protein is Secretory-abundant heat soluble protein 2 of Ramazzottius varieornatus (Water bear).